The following is a 148-amino-acid chain: Single-stranded DNA-binding protein 2 (148 aa).

The region spanning 6–108 (MNHITVSGLV…IEAESFGHDL (103 aa)) is the SSB domain.

In terms of assembly, homotetramer.

This chain is Single-stranded DNA-binding protein 2 (ssb2), found in Tropheryma whipplei (strain TW08/27) (Whipple's bacillus).